Here is a 218-residue protein sequence, read N- to C-terminus: Thiopurine S-methyltransferase (218 aa).

Residues W10, L45, E66, and R123 each coordinate S-adenosyl-L-methionine.

This sequence belongs to the class I-like SAM-binding methyltransferase superfamily. TPMT family.

It localises to the cytoplasm. The catalysed reaction is S-adenosyl-L-methionine + a thiopurine = S-adenosyl-L-homocysteine + a thiopurine S-methylether.. This is Thiopurine S-methyltransferase from Shewanella sp. (strain W3-18-1).